A 626-amino-acid polypeptide reads, in one-letter code: NAD-dependent malic enzyme, mitochondrial (626 aa).

A mitochondrion-targeting transit peptide spans 1 to 34; that stretch reads MAIFSNQMRLSSTLLKRLHQRVAAAVNSSSSRNF. Arginine 91 and arginine 125 together coordinate fumarate. Tyrosine 146 serves as the catalytic Proton donor. Arginine 199 is a binding site for (S)-malate. Arginine 199 is a binding site for NAD(+). Lysine 217 serves as the catalytic Proton acceptor. A divalent metal cation contacts are provided by glutamate 288, aspartate 289, and aspartate 312. NAD(+) contacts are provided by alanine 348 and alanine 351. The (S)-malate site is built by asparagine 467 and asparagine 512.

This sequence belongs to the malic enzymes family. In terms of assembly, heterodimer of two related subunits. It depends on Mg(2+) as a cofactor. Requires Mn(2+) as cofactor.

It localises to the mitochondrion matrix. It carries out the reaction (S)-malate + NAD(+) = pyruvate + CO2 + NADH. The protein is NAD-dependent malic enzyme, mitochondrial of Solanum tuberosum (Potato).